Consider the following 249-residue polypeptide: Aspartate/glutamate leucyltransferase (249 aa).

It belongs to the R-transferase family. Bpt subfamily.

Its subcellular location is the cytoplasm. The enzyme catalyses N-terminal L-glutamyl-[protein] + L-leucyl-tRNA(Leu) = N-terminal L-leucyl-L-glutamyl-[protein] + tRNA(Leu) + H(+). It carries out the reaction N-terminal L-aspartyl-[protein] + L-leucyl-tRNA(Leu) = N-terminal L-leucyl-L-aspartyl-[protein] + tRNA(Leu) + H(+). Functions in the N-end rule pathway of protein degradation where it conjugates Leu from its aminoacyl-tRNA to the N-termini of proteins containing an N-terminal aspartate or glutamate. The polypeptide is Aspartate/glutamate leucyltransferase (Azorhizobium caulinodans (strain ATCC 43989 / DSM 5975 / JCM 20966 / LMG 6465 / NBRC 14845 / NCIMB 13405 / ORS 571)).